A 340-amino-acid chain; its full sequence is Phenylalanine--tRNA ligase alpha subunit (340 aa).

Glutamate 254 provides a ligand contact to Mg(2+).

This sequence belongs to the class-II aminoacyl-tRNA synthetase family. Phe-tRNA synthetase alpha subunit type 1 subfamily. As to quaternary structure, tetramer of two alpha and two beta subunits. The cofactor is Mg(2+).

It is found in the cytoplasm. It carries out the reaction tRNA(Phe) + L-phenylalanine + ATP = L-phenylalanyl-tRNA(Phe) + AMP + diphosphate + H(+). This chain is Phenylalanine--tRNA ligase alpha subunit, found in Chloroherpeton thalassium (strain ATCC 35110 / GB-78).